The primary structure comprises 363 residues: Chorismate synthase (363 aa).

Residues 42–61 (QRDLDRRKPGTSRHTTQRQE) are disordered. NADP(+) is bound by residues R48 and R54. FMN is bound by residues 125–127 (RSS), 237–238 (NA), G277, 292–296 (KPTSS), and R318.

It belongs to the chorismate synthase family. In terms of assembly, homotetramer. It depends on FMNH2 as a cofactor.

It carries out the reaction 5-O-(1-carboxyvinyl)-3-phosphoshikimate = chorismate + phosphate. Its pathway is metabolic intermediate biosynthesis; chorismate biosynthesis; chorismate from D-erythrose 4-phosphate and phosphoenolpyruvate: step 7/7. Catalyzes the anti-1,4-elimination of the C-3 phosphate and the C-6 proR hydrogen from 5-enolpyruvylshikimate-3-phosphate (EPSP) to yield chorismate, which is the branch point compound that serves as the starting substrate for the three terminal pathways of aromatic amino acid biosynthesis. This reaction introduces a second double bond into the aromatic ring system. This chain is Chorismate synthase, found in Pseudomonas aeruginosa (strain LESB58).